Consider the following 205-residue polypeptide: Large ribosomal subunit protein uL4 (205 aa).

The interval 43 to 78 (ARAGTKAQKTRSEVAGGGKKPWRQKGTGNARAGTIR) is disordered.

The protein belongs to the universal ribosomal protein uL4 family. In terms of assembly, part of the 50S ribosomal subunit.

In terms of biological role, one of the primary rRNA binding proteins, this protein initially binds near the 5'-end of the 23S rRNA. It is important during the early stages of 50S assembly. It makes multiple contacts with different domains of the 23S rRNA in the assembled 50S subunit and ribosome. Functionally, forms part of the polypeptide exit tunnel. This is Large ribosomal subunit protein uL4 from Halorhodospira halophila (strain DSM 244 / SL1) (Ectothiorhodospira halophila (strain DSM 244 / SL1)).